Consider the following 485-residue polypeptide: MGIFRFISISLAAVSAANAGHILSMGHAKTIPNSYIVVMKDGTTKEDFTHHQSWVQSIHTHNVTRRGLLDNAGVRHKYGFGSMMGYAGLFDEDTIKDISDDPKVMFVEPDTTITIHGELTQNDVPSWGLARISSQRPGTEDYTYDSSAGEGITVYSVDTGVDIHHEDFEGRASWGTNMIEDGYDKDGNGHGTHTAGTMVGKTFGIAKKAKVVAVKVLDNNGSGPTSGIIAGINWCAQHASQNGGTDKAVINMSLGGGSSSALNRAAAQAVQKGMFLAVAAGNDNQDARTSSPASEDTVCTVGASAENDERSSFSNWGPAVDLFAPGSNIVSTRPGGGSQSMSGTSMASPHVAGLGAYIMALEGISGSAVCDRLKQLGTSSVTNPGPGTRTNILINNGDAKNGGKKPSQPSQPPKPSQPSKPQQPSEPQEPSEPQEPAPGQPAPAPAPVPQHPHTPFPNDDFNFDDFWKKYFGTDHWRKTFGRFWN.

Positions 1–19 (MGIFRFISISLAAVSAANA) are cleaved as a signal peptide. A propeptide spanning residues 20-116 (GHILSMGHAK…VEPDTTITIH (97 aa)) is cleaved from the precursor. Residues 34 to 116 (SYIVVMKDGT…VEPDTTITIH (83 aa)) enclose the Inhibitor I9 domain. A Peptidase S8 domain is found at 126–400 (SWGLARISSQ…NILINNGDAK (275 aa)). Catalysis depends on charge relay system residues aspartate 158 and histidine 190. The N-linked (GlcNAc...) asparagine glycan is linked to asparagine 251. Serine 345 (charge relay system) is an active-site residue. Polar residues predominate over residues 377-394 (GTSSVTNPGPGTRTNILI). The segment at 377-462 (GTSSVTNPGP…HTPFPNDDFN (86 aa)) is disordered. Over residues 409–418 (PSQPPKPSQP) the composition is skewed to pro residues. Residues 419–428 (SKPQQPSEPQ) show a composition bias toward low complexity. The segment covering 433-455 (PQEPAPGQPAPAPAPVPQHPHTP) has biased composition (pro residues).

The protein belongs to the peptidase S8 family.

The protein localises to the secreted. Secreted subtilisin-like serine protease with keratinolytic activity that contributes to pathogenicity. This Arthroderma otae (Microsporum canis) protein is Subtilisin-like protease 1 (SUB1).